A 352-amino-acid polypeptide reads, in one-letter code: PDZ and LIM domain protein 2 (352 aa).

In terms of domain architecture, PDZ spans Met-1 to Gln-84. Disordered regions lie at residues Ser-67–Leu-97 and Tyr-111–Ala-149. Residues Asp-81–Ser-95 show a composition bias toward polar residues. Over residues Tyr-111 to Pro-135 the composition is skewed to low complexity. Ser-124 bears the Phosphoserine mark. At Thr-126 the chain carries Phosphothreonine. 10 positions are modified to phosphoserine: Ser-127, Ser-129, Ser-134, Ser-137, Ser-143, Ser-161, Ser-197, Ser-203, Ser-213, and Ser-266. Residues Leu-170–Ser-213 form a disordered region. Positions His-284–Ala-344 constitute an LIM zinc-binding domain.

In terms of assembly, interacts with alpha-actinins ACTN1 and ACTN4, FLNA and MYH9. Interacts (via LIM zinc-binding domain) with MKRN2.

Its subcellular location is the cytoplasm. The protein localises to the nucleus. The protein resides in the cytoskeleton. Its function is as follows. Probable adapter protein located at the actin cytoskeleton that promotes cell attachment. Necessary for the migratory capacity of epithelial cells. Overexpression enhances cell adhesion to collagen and fibronectin and suppresses anchorage independent growth. May contribute to tumor cell migratory capacity. The chain is PDZ and LIM domain protein 2 (PDLIM2) from Homo sapiens (Human).